Consider the following 360-residue polypeptide: Phospho-N-acetylmuramoyl-pentapeptide-transferase (360 aa).

A run of 10 helical transmembrane segments spans residues 25–45, 71–91, 94–114, 129–148, 168–188, 199–219, 239–259, 263–283, 288–308, and 337–357; these read TGGA…WIID, TPTM…VLWA, LNPY…VGFY, SGRT…CYAL, TAIY…VGAG, GLAI…SYLA, LAVL…FNAP, IFMG…IAVA, FVLA…IVQV, and QIVI…LSTL.

This sequence belongs to the glycosyltransferase 4 family. MraY subfamily. Mg(2+) is required as a cofactor.

The protein localises to the cell inner membrane. It carries out the reaction UDP-N-acetyl-alpha-D-muramoyl-L-alanyl-gamma-D-glutamyl-meso-2,6-diaminopimeloyl-D-alanyl-D-alanine + di-trans,octa-cis-undecaprenyl phosphate = di-trans,octa-cis-undecaprenyl diphospho-N-acetyl-alpha-D-muramoyl-L-alanyl-D-glutamyl-meso-2,6-diaminopimeloyl-D-alanyl-D-alanine + UMP. It functions in the pathway cell wall biogenesis; peptidoglycan biosynthesis. In terms of biological role, catalyzes the initial step of the lipid cycle reactions in the biosynthesis of the cell wall peptidoglycan: transfers peptidoglycan precursor phospho-MurNAc-pentapeptide from UDP-MurNAc-pentapeptide onto the lipid carrier undecaprenyl phosphate, yielding undecaprenyl-pyrophosphoryl-MurNAc-pentapeptide, known as lipid I. This chain is Phospho-N-acetylmuramoyl-pentapeptide-transferase, found in Rhodopseudomonas palustris (strain BisA53).